The primary structure comprises 467 residues: Hydroxyacid-oxoacid transhydrogenase, mitochondrial (467 aa).

Lys-445 is subject to N6-acetyllysine. The residue at position 452 (Ser-452) is a Phosphoserine.

Belongs to the iron-containing alcohol dehydrogenase family. Hydroxyacid-oxoacid transhydrogenase subfamily.

The protein localises to the mitochondrion. It catalyses the reaction (S)-3-hydroxybutanoate + 2-oxoglutarate = (R)-2-hydroxyglutarate + acetoacetate. It carries out the reaction 4-hydroxybutanoate + 2-oxoglutarate = (R)-2-hydroxyglutarate + succinate semialdehyde. Functionally, catalyzes the cofactor-independent reversible oxidation of gamma-hydroxybutyrate (GHB) to succinic semialdehyde (SSA) coupled to reduction of 2-ketoglutarate (2-KG) to D-2-hydroxyglutarate (D-2-HG). L-3-hydroxybutyrate (L-3-OHB) is also a substrate for HOT when using 2-KG as hydrogen acceptor, resulting in the formation of D-2-HG. The chain is Hydroxyacid-oxoacid transhydrogenase, mitochondrial (ADHFE1) from Pongo abelii (Sumatran orangutan).